A 206-amino-acid polypeptide reads, in one-letter code: High frequency lysogenization protein HflD homolog (206 aa).

The protein belongs to the HflD family.

Its subcellular location is the cytoplasm. It localises to the cell inner membrane. This is High frequency lysogenization protein HflD homolog from Pseudomonas syringae pv. tomato (strain ATCC BAA-871 / DC3000).